Consider the following 199-residue polypeptide: Holliday junction branch migration complex subunit RuvA (199 aa).

The domain I stretch occupies residues M1–S63. Residues D64–A142 are domain II. The segment at A143–V150 is flexible linker. Positions V150 to K199 are domain III.

The protein belongs to the RuvA family. Homotetramer. Forms an RuvA(8)-RuvB(12)-Holliday junction (HJ) complex. HJ DNA is sandwiched between 2 RuvA tetramers; dsDNA enters through RuvA and exits via RuvB. An RuvB hexamer assembles on each DNA strand where it exits the tetramer. Each RuvB hexamer is contacted by two RuvA subunits (via domain III) on 2 adjacent RuvB subunits; this complex drives branch migration. In the full resolvosome a probable DNA-RuvA(4)-RuvB(12)-RuvC(2) complex forms which resolves the HJ.

Its subcellular location is the cytoplasm. Functionally, the RuvA-RuvB-RuvC complex processes Holliday junction (HJ) DNA during genetic recombination and DNA repair, while the RuvA-RuvB complex plays an important role in the rescue of blocked DNA replication forks via replication fork reversal (RFR). RuvA specifically binds to HJ cruciform DNA, conferring on it an open structure. The RuvB hexamer acts as an ATP-dependent pump, pulling dsDNA into and through the RuvAB complex. HJ branch migration allows RuvC to scan DNA until it finds its consensus sequence, where it cleaves and resolves the cruciform DNA. The polypeptide is Holliday junction branch migration complex subunit RuvA (Acinetobacter baumannii (strain ACICU)).